We begin with the raw amino-acid sequence, 66 residues long: Cold shock-like protein CspLA (66 aa).

The CSD domain occupies 4–63 (GTVKWFNAEKGFGFIERENGDDVFVHFSAIQGDGFKSLDEGQAVTFDVEEGQRGPQAANV).

Homodimer.

The protein localises to the cytoplasm. The sequence is that of Cold shock-like protein CspLA (cspLA) from Listeria innocua serovar 6a (strain ATCC BAA-680 / CLIP 11262).